The primary structure comprises 205 residues: Glycerol-3-phosphate acyltransferase (205 aa).

The next 5 membrane-spanning stretches (helical) occupy residues Val-3–Leu-23, Gly-53–Ala-73, Pro-80–Phe-100, Leu-112–Leu-132, and Gly-138–Phe-158.

Belongs to the PlsY family. As to quaternary structure, probably interacts with PlsX.

The protein resides in the cell inner membrane. The enzyme catalyses an acyl phosphate + sn-glycerol 3-phosphate = a 1-acyl-sn-glycero-3-phosphate + phosphate. It participates in lipid metabolism; phospholipid metabolism. Catalyzes the transfer of an acyl group from acyl-phosphate (acyl-PO(4)) to glycerol-3-phosphate (G3P) to form lysophosphatidic acid (LPA). This enzyme utilizes acyl-phosphate as fatty acyl donor, but not acyl-CoA or acyl-ACP. The protein is Glycerol-3-phosphate acyltransferase of Erwinia tasmaniensis (strain DSM 17950 / CFBP 7177 / CIP 109463 / NCPPB 4357 / Et1/99).